The following is a 349-amino-acid chain: Protein RecA (349 aa).

ATP is bound at residue 65-72; it reads GPESSGKT.

This sequence belongs to the RecA family.

It is found in the cytoplasm. Functionally, can catalyze the hydrolysis of ATP in the presence of single-stranded DNA, the ATP-dependent uptake of single-stranded DNA by duplex DNA, and the ATP-dependent hybridization of homologous single-stranded DNAs. It interacts with LexA causing its activation and leading to its autocatalytic cleavage. The sequence is that of Protein RecA from Aliarcobacter butzleri (strain RM4018) (Arcobacter butzleri).